Reading from the N-terminus, the 211-residue chain is Thiamine-phosphate synthase (211 aa).

4-amino-2-methyl-5-(diphosphooxymethyl)pyrimidine-binding positions include Gln36–Lys40 and Asn68. Mg(2+) is bound by residues Asp69 and Asp88. Ser107 is a 4-amino-2-methyl-5-(diphosphooxymethyl)pyrimidine binding site. Position 133–135 (Thr133–Ser135) interacts with 2-[(2R,5Z)-2-carboxy-4-methylthiazol-5(2H)-ylidene]ethyl phosphate. Position 136 (Lys136) interacts with 4-amino-2-methyl-5-(diphosphooxymethyl)pyrimidine. Residues Gly167 and Ile187 to Thr188 contribute to the 2-[(2R,5Z)-2-carboxy-4-methylthiazol-5(2H)-ylidene]ethyl phosphate site.

This sequence belongs to the thiamine-phosphate synthase family. Requires Mg(2+) as cofactor.

The catalysed reaction is 2-[(2R,5Z)-2-carboxy-4-methylthiazol-5(2H)-ylidene]ethyl phosphate + 4-amino-2-methyl-5-(diphosphooxymethyl)pyrimidine + 2 H(+) = thiamine phosphate + CO2 + diphosphate. It carries out the reaction 2-(2-carboxy-4-methylthiazol-5-yl)ethyl phosphate + 4-amino-2-methyl-5-(diphosphooxymethyl)pyrimidine + 2 H(+) = thiamine phosphate + CO2 + diphosphate. The enzyme catalyses 4-methyl-5-(2-phosphooxyethyl)-thiazole + 4-amino-2-methyl-5-(diphosphooxymethyl)pyrimidine + H(+) = thiamine phosphate + diphosphate. The protein operates within cofactor biosynthesis; thiamine diphosphate biosynthesis; thiamine phosphate from 4-amino-2-methyl-5-diphosphomethylpyrimidine and 4-methyl-5-(2-phosphoethyl)-thiazole: step 1/1. Condenses 4-methyl-5-(beta-hydroxyethyl)thiazole monophosphate (THZ-P) and 2-methyl-4-amino-5-hydroxymethyl pyrimidine pyrophosphate (HMP-PP) to form thiamine monophosphate (TMP). This chain is Thiamine-phosphate synthase, found in Haloarcula marismortui (strain ATCC 43049 / DSM 3752 / JCM 8966 / VKM B-1809) (Halobacterium marismortui).